A 484-amino-acid chain; its full sequence is Glutamate--tRNA ligase (484 aa).

The 'HIGH' region signature appears at 11–21; that stretch reads PSPTGYLHIGN. Positions 252–256 match the 'KMSKS' region motif; that stretch reads KLSKR. Lys-255 provides a ligand contact to ATP.

Belongs to the class-I aminoacyl-tRNA synthetase family. Glutamate--tRNA ligase type 1 subfamily. In terms of assembly, monomer.

Its subcellular location is the cytoplasm. The catalysed reaction is tRNA(Glu) + L-glutamate + ATP = L-glutamyl-tRNA(Glu) + AMP + diphosphate. Functionally, catalyzes the attachment of glutamate to tRNA(Glu) in a two-step reaction: glutamate is first activated by ATP to form Glu-AMP and then transferred to the acceptor end of tRNA(Glu). In Staphylococcus saprophyticus subsp. saprophyticus (strain ATCC 15305 / DSM 20229 / NCIMB 8711 / NCTC 7292 / S-41), this protein is Glutamate--tRNA ligase.